The sequence spans 73 residues: Cell division protein ZapB (73 aa).

Positions 3-67 (LELLSKLETK…WNDKVTGLVG (65 aa)) form a coiled coil.

The protein belongs to the ZapB family. As to quaternary structure, homodimer. The ends of the coiled-coil dimer bind to each other, forming polymers. Interacts with FtsZ.

The protein resides in the cytoplasm. Non-essential, abundant cell division factor that is required for proper Z-ring formation. It is recruited early to the divisome by direct interaction with FtsZ, stimulating Z-ring assembly and thereby promoting cell division earlier in the cell cycle. Its recruitment to the Z-ring requires functional FtsA or ZipA. In Shewanella sp. (strain MR-4), this protein is Cell division protein ZapB.